A 116-amino-acid chain; its full sequence is Host transcription reprogramming factor 4 (116 aa).

Residues Met-1–Gly-24 form the signal peptide. The segment at Gly-24–Arg-53 is disordered. Polar residues predominate over residues Val-33 to Pro-47. A C2H2-type; degenerate zinc finger spans residues Phe-74–Phe-96.

The protein localises to the secreted. The protein resides in the host nucleus. In terms of biological role, probable secreted effector that translocates into the nuclei of host cells to reprogram the expression of targeted genes by binding on effector binding elements in rice. This chain is Host transcription reprogramming factor 4, found in Pyricularia oryzae (strain 70-15 / ATCC MYA-4617 / FGSC 8958) (Rice blast fungus).